A 348-amino-acid polypeptide reads, in one-letter code: Protein RecA (348 aa).

67–74 (GPESSGKT) lines the ATP pocket.

The protein belongs to the RecA family.

It is found in the cytoplasm. Functionally, can catalyze the hydrolysis of ATP in the presence of single-stranded DNA, the ATP-dependent uptake of single-stranded DNA by duplex DNA, and the ATP-dependent hybridization of homologous single-stranded DNAs. It interacts with LexA causing its activation and leading to its autocatalytic cleavage. In Salinispora tropica (strain ATCC BAA-916 / DSM 44818 / JCM 13857 / NBRC 105044 / CNB-440), this protein is Protein RecA.